Consider the following 296-residue polypeptide: MIVPLQGAQMLQMLEKSLRKYLPESLKVYGTVYHMIHGNPFNLKALVDKWPDFNTVVVRPQEQEMTDDLDFYINTYQVYSKDPQNCQEFLESSEVINWKQHLQIQSSQSHLNKTIQNLASIQSFQIKHSENILYVSSETIKKLFPSLLDTKNLSTGSGKPKAIDQDKFKLSSLDVVHAALVNKFWLFGGNERSQRFIERCIKNFPSSCVLGPEGTPASWTLMDQTGEMRMGGTMPEYRLQGLVSFVVHSQDQIMTKRGYPVYSHTEKSNIAMQKMSYTLQHLPMPCAWNQWKCMPM.

Lys16 is modified (N6-acetyllysine; alternate). Position 16 is an N6-succinyllysine; alternate (Lys16). Lys113 bears the N6-acetyllysine mark. N6-acetyllysine; alternate occurs at positions 127, 141, and 142. Lys127, Lys141, and Lys142 each carry N6-succinyllysine; alternate. Residues Lys159 and Lys167 each carry the N6-acetyllysine modification. Lys169 carries the post-translational modification N6-succinyllysine. N6-acetyllysine; alternate occurs at positions 183 and 256. Lys183 and Lys256 each carry N6-succinyllysine; alternate. The residue at position 267 (Lys267) is an N6-succinyllysine.

The protein belongs to the glycine N-acyltransferase family.

Its subcellular location is the mitochondrion. The enzyme catalyses an acyl-CoA + glycine = an N-acylglycine + CoA + H(+). It carries out the reaction benzoyl-CoA + glycine = N-benzoylglycine + CoA + H(+). In terms of biological role, mitochondrial acyltransferase which transfers an acyl group to the N-terminus of glycine and glutamine, although much less efficiently. Can conjugate a multitude of substrates to form a variety of N-acylglycines, thereby detoxify xenobiotics, such as benzoic acid or salicylic acid, and endogenous organic acids, such as isovaleric acid. The sequence is that of Glycine N-acyltransferase (Glyat) from Mus musculus (Mouse).